A 469-amino-acid chain; its full sequence is IAA-alanine resistance protein 1 (469 aa).

The signal sequence occupies residues 1–28 (MSFSLRKLLVPILVLVLFLDLCVESGFS). The disordered stretch occupies residues 33 to 58 (ARDDHVHHHGGGCSHSHDHDHDHDHD). Basic and acidic residues predominate over residues 47 to 58 (HSHDHDHDHDHD). 2 helical membrane passes run 114–134 (CSLLVSLASLICLVLLPIMFV) and 141–161 (WFVDSLALFGAGAMLGDAFLH). Residues 170–197 (GHSHSNDHHENHDHHDHSHSDSPSHSHS) are disordered. Residues 173–193 (HSNDHHENHDHHDHSHSDSPS) are compositionally biased toward basic and acidic residues. A helical membrane pass occupies residues 201-221 (LSVGLSVLAGIVVFLLVEKLV). The disordered stretch occupies residues 228 to 315 (SSGSNTWGHH…GKSDKPEQVE (88 aa)). Positions 235-246 (GHHHHHHHAGSK) are enriched in basic residues. Basic and acidic residues predominate over residues 247 to 256 (KLKDEGDHNN). Positions 257-279 (LDQQSSSDAIVNSSEKVSGGSTD) are enriched in polar residues. Positions 292–315 (ATDKSDSGTEITSDGKSDKPEQVE) are enriched in basic and acidic residues. 3 consecutive transmembrane segments (helical) span residues 387–407 (LFFNFLSALVALAGTALVLVW), 415–435 (SLIEGFTAGGFIYIAVAGVLA), and 448–468 (SACHLISLILGMSVALCISLI).

This sequence belongs to the ZIP transporter (TC 2.A.5) family. KE4/Catsup subfamily.

The protein resides in the membrane. Its function is as follows. May participate in auxin metabolism or response. Probable transporter. This is IAA-alanine resistance protein 1 (IAR1) from Arabidopsis thaliana (Mouse-ear cress).